The following is a 237-amino-acid chain: Ribonuclease PH (237 aa).

Phosphate-binding positions include Arg-86 and 124–126; that span reads GTR.

This sequence belongs to the RNase PH family. As to quaternary structure, homohexameric ring arranged as a trimer of dimers.

The enzyme catalyses tRNA(n+1) + phosphate = tRNA(n) + a ribonucleoside 5'-diphosphate. In terms of biological role, phosphorolytic 3'-5' exoribonuclease that plays an important role in tRNA 3'-end maturation. Removes nucleotide residues following the 3'-CCA terminus of tRNAs; can also add nucleotides to the ends of RNA molecules by using nucleoside diphosphates as substrates, but this may not be physiologically important. Probably plays a role in initiation of 16S rRNA degradation (leading to ribosome degradation) during starvation. The protein is Ribonuclease PH of Roseobacter denitrificans (strain ATCC 33942 / OCh 114) (Erythrobacter sp. (strain OCh 114)).